A 718-amino-acid chain; its full sequence is Putative methyltransferase NSUN7 (718 aa).

Residue C439 is the Nucleophile of the active site. Disordered regions lie at residues G536–T557, A578–P616, and S694–L718. Basic residues predominate over residues S538–K549. Over residues Q591 to R604 the composition is skewed to polar residues. A compositionally biased stretch (basic and acidic residues) spans S696 to T706.

This sequence belongs to the class I-like SAM-binding methyltransferase superfamily. RsmB/NOP family.

In terms of biological role, may have S-adenosyl-L-methionine-dependent methyl-transferase activity. The sequence is that of Putative methyltransferase NSUN7 (NSUN7) from Homo sapiens (Human).